The sequence spans 199 residues: Interferon kappa (199 aa).

The first 21 residues, 1 to 21 (MTPKFLWLVALVALYIPPIQS), serve as a signal peptide directing secretion. Disulfide bonds link cysteine 24-cysteine 119 and cysteine 49-cysteine 162.

It belongs to the alpha/beta interferon family. As to expression, expressed at low levels in peritoneal macrophages.

It localises to the secreted. Its function is as follows. May play a role in the regulation of immune cell function. The polypeptide is Interferon kappa (Ifnk) (Mus musculus (Mouse)).